Here is a 386-residue protein sequence, read N- to C-terminus: S-adenosylmethionine synthase (386 aa).

Histidine 17 contributes to the ATP binding site. Mg(2+) is bound at residue aspartate 19. Position 45 (glutamate 45) interacts with K(+). L-methionine-binding residues include glutamate 58 and glutamine 101. Residues 101–111 are flexible loop; sequence QSPDISQGVTE. ATP-binding positions include 168–170, aspartate 242, 248–249, alanine 265, and lysine 269; these read DAK and RK. Aspartate 242 contacts L-methionine. Residue lysine 273 participates in L-methionine binding.

The protein belongs to the AdoMet synthase family. In terms of assembly, homotetramer; dimer of dimers. It depends on Mg(2+) as a cofactor. K(+) is required as a cofactor.

The protein resides in the cytoplasm. It catalyses the reaction L-methionine + ATP + H2O = S-adenosyl-L-methionine + phosphate + diphosphate. The protein operates within amino-acid biosynthesis; S-adenosyl-L-methionine biosynthesis; S-adenosyl-L-methionine from L-methionine: step 1/1. Functionally, catalyzes the formation of S-adenosylmethionine (AdoMet) from methionine and ATP. The overall synthetic reaction is composed of two sequential steps, AdoMet formation and the subsequent tripolyphosphate hydrolysis which occurs prior to release of AdoMet from the enzyme. This chain is S-adenosylmethionine synthase, found in Leptospira borgpetersenii serovar Hardjo-bovis (strain JB197).